The primary structure comprises 1607 residues: Putative molluscan insulin-related peptide(s) receptor (1607 aa).

An N-terminal signal peptide occupies residues 1 to 35 (MHPGSISFNMIINKCIPICLFILFIMMMEFTVSKA). N-linked (GlcNAc...) asparagine glycosylation is found at Asn-82, Asn-188, Asn-245, Asn-275, Asn-332, Asn-343, Asn-495, Asn-520, Asn-663, Asn-710, Asn-778, Asn-796, Asn-802, Asn-868, Asn-879, Asn-940, and Asn-953. 3 Fibronectin type-III domains span residues 517–632 (HDLN…TYPF), 636–726 (EPTD…SKEE), and 756–861 (LPDE…TKDS). Over 698–975 (EKVKIEEEGK…RPPDPESSNT (278 aa)) the chain is Extracellular. The Fibronectin type-III 4 domain occupies 870-967 (TTVDTEIETN…LERFFIVPRP (98 aa)). A helical transmembrane segment spans residues 976–996 (LLIVAIVLAFFGVLTVSLIVA). Topologically, residues 997–1607 (CVYYKQKIRS…WSTLKMVLVL (611 aa)) are cytoplasmic. The Protein kinase domain occupies 1037–1308 (IKLIKELGQG…AIIEYLLPKL (272 aa)). Residues 1043–1051 (LGQGSFGMV) and Lys-1072 each bind ATP. Residue Asp-1173 is the Proton acceptor of the active site. Tyr-1199 carries the phosphotyrosine; by autocatalysis modification. Disordered regions lie at residues 1328–1352 (GAGE…LSCE) and 1501–1539 (TLNG…SSSW). A compositionally biased stretch (polar residues) spans 1503 to 1515 (NGNQSSHNNNSFE). Positions 1524–1538 (SGPASESSNGVSSSS) are enriched in low complexity.

The protein belongs to the protein kinase superfamily. Tyr protein kinase family. Insulin receptor subfamily. In terms of assembly, probable tetramer of 2 alpha and 2 beta chains linked by disulfide bonds. The alpha chains contribute to the formation of the ligand-binding domain, while the beta chains carry the kinase domain. The cofactor is Mn(2+).

It is found in the membrane. The enzyme catalyses L-tyrosyl-[protein] + ATP = O-phospho-L-tyrosyl-[protein] + ADP + H(+). This receptor probably binds to the four different molluscan insulin-related peptides and has a tyrosine-protein kinase activity. The polypeptide is Putative molluscan insulin-related peptide(s) receptor (Lymnaea stagnalis (Great pond snail)).